The sequence spans 247 residues: Sec-independent protein translocase protein TatC (247 aa).

5 consecutive transmembrane segments (helical) span residues 21 to 41 (IILLSFFLAFFVGLFVSKPLI), 71 to 91 (AFIIGLILVFPVILYQLWAFV), 109 to 129 (ITFLLFLCGVVFSYVITFPFI), 154 to 174 (FLLQIVLSFGVLFELPMVIML), and 195 to 215 (FCLLIIAAFIAPPEILSHLMI).

Belongs to the TatC family. As to quaternary structure, forms a complex with TatA.

Its subcellular location is the cell membrane. Its function is as follows. Part of the twin-arginine translocation (Tat) system that transports large folded proteins containing a characteristic twin-arginine motif in their signal peptide across membranes. The sequence is that of Sec-independent protein translocase protein TatC from Listeria innocua serovar 6a (strain ATCC BAA-680 / CLIP 11262).